Consider the following 466-residue polypeptide: Argininosuccinate lyase (466 aa).

Residues S27, N114, and T159 each contribute to the 2-(N(omega)-L-arginino)succinate site. Residue H160 is the Proton acceptor of the active site. S281 serves as the catalytic Proton donor. 2-(N(omega)-L-arginino)succinate-binding residues include N289, Y321, Q326, and K329.

This sequence belongs to the lyase 1 family. Argininosuccinate lyase subfamily. In terms of assembly, homotetramer. Post-translationally, the N-terminus is blocked. Eye lens.

The enzyme catalyses 2-(N(omega)-L-arginino)succinate = fumarate + L-arginine. It functions in the pathway amino-acid biosynthesis; L-arginine biosynthesis; L-arginine from L-ornithine and carbamoyl phosphate: step 3/3. Delta crystallin, the principal crystallin in embryonic lens, is found only in birds and reptiles. This protein also functions as an enzymatically active argininosuccinate lyase, but it has a low activity. The chain is Argininosuccinate lyase (ASL) from Columba livia (Rock dove).